The following is a 73-amino-acid chain: UPF0057 membrane protein At4g30650 (73 aa).

A run of 2 helical transmembrane segments spans residues 4–24 (NMEV…GVCL) and 37–57 (LVLT…VIVF).

This sequence belongs to the UPF0057 (PMP3) family.

The protein localises to the membrane. The sequence is that of UPF0057 membrane protein At4g30650 from Arabidopsis thaliana (Mouse-ear cress).